The sequence spans 211 residues: MSALRQKLDALIEQTDLQVNERQREQLLGYVELLNKWNKAYNLTSVRDPQDMLVKHILDSIVVAPHLDGERFIDVGTGPGLPGIPLAIMHPEKTFFLLDSLGKRIRFIKQVLHELKIENVTTVQSRVEEFQPEEKFDGVLSRAFASMTDMVEWCHHLPKTGQGVFLALKGLHPKDEIDQLPEWCSVTEIISLTVPELEGDRHLVILSRKDN.

S-adenosyl-L-methionine contacts are provided by residues G76, L81, 127 to 128 (VE), and R142.

It belongs to the methyltransferase superfamily. RNA methyltransferase RsmG family.

It is found in the cytoplasm. The enzyme catalyses guanosine(527) in 16S rRNA + S-adenosyl-L-methionine = N(7)-methylguanosine(527) in 16S rRNA + S-adenosyl-L-homocysteine. Its function is as follows. Specifically methylates the N7 position of guanine in position 527 of 16S rRNA. This chain is Ribosomal RNA small subunit methyltransferase G, found in Vibrio vulnificus (strain CMCP6).